The primary structure comprises 478 residues: Cytochrome c-552 (478 aa).

A signal peptide spans 1-26; the sequence is MARKTLRARRFFSLIFPFFFITSVYA. Histidine 94 serves as a coordination point for heme c. Residues cysteine 122, cysteine 125, and lysine 126 each contribute to the heme site. The heme c site is built by cysteine 160, cysteine 163, histidine 164, cysteine 209, cysteine 212, and histidine 213. 4 residues coordinate Ca(2+): glutamate 215, tyrosine 216, lysine 261, and glutamine 263. Tyrosine 216 is a binding site for substrate. Position 264 (histidine 264) interacts with substrate. Heme c contacts are provided by histidine 275, cysteine 282, cysteine 285, histidine 286, histidine 301, cysteine 314, cysteine 317, histidine 318, and histidine 393.

The protein belongs to the cytochrome c-552 family. The cofactor is Ca(2+). Heme c is required as a cofactor.

It is found in the periplasm. The enzyme catalyses 6 Fe(III)-[cytochrome c] + NH4(+) + 2 H2O = 6 Fe(II)-[cytochrome c] + nitrite + 8 H(+). The protein operates within nitrogen metabolism; nitrate reduction (assimilation). Its function is as follows. Catalyzes the reduction of nitrite to ammonia, consuming six electrons in the process. This chain is Cytochrome c-552, found in Salmonella paratyphi A (strain ATCC 9150 / SARB42).